Here is an 812-residue protein sequence, read N- to C-terminus: Toll-like receptor 10 (812 aa).

The signal sequence occupies residues 1–19; the sequence is MRYIRSIYIFCSIVTSVRS. Residues 20 to 577 are Extracellular-facing; sequence GASELPEERE…VHLPEISCNT (558 aa). LRR repeat units lie at residues 24 to 46, 49 to 70, 73 to 94, 97 to 118, and 119 to 139; these read LPEE…PEGL, ITTT…DFRS, KLKV…TFEF, ELSY…SLAG, and LRHL…VETG. A glycan (N-linked (GlcNAc...) asparagine) is linked at Asn-33. N-linked (GlcNAc...) asparagine glycosylation is present at Asn-140. Residues 143–166 form an LRR 6 repeat; the sequence is HLETLGLSGAKIQKSDFQKIAHLQ. The N-linked (GlcNAc...) asparagine glycan is linked to Asn-189. LRR repeat units lie at residues 296–321, 325–348, 350–373, and 374–395; these read SNTV…ESIY, TKMD…PMYP, RFQY…IQLP, and HLKT…SHFA. Asn-331 carries an N-linked (GlcNAc...) asparagine glycan. The N-linked (GlcNAc...) asparagine glycan is linked to Asn-397. 5 LRR repeats span residues 399–420, 423–443, 445–467, 468–489, and 490–510; these read SLRH…NCLW, TLVT…GCLP, NIQI…THLT, SLRE…SHFR, and RLLV…DFFQ. The N-linked (GlcNAc...) asparagine glycan is linked to Asn-428. One can recognise an LRRCT domain in the interval 523-577; it reads NPFRCTCELRDFIQLGKYSEGMMVGWSDSYICEYPLNLKGTQLKDVHLPEISCNT. The chain crosses the membrane as a helical span at residues 578 to 598; the sequence is GLLIVTIVVVMLVLGMAVAFC. Over 599-812 the chain is Cytoplasmic; that stretch reads CLHFDLPWYL…AISLIRTDCL (214 aa). Residues 633 to 776 form the TIR domain; that stretch reads VQFHVFISYS…LFWANLRAAL (144 aa).

This sequence belongs to the Toll-like receptor family. In terms of assembly, binds MYD88 via their respective TIR domains.

Its subcellular location is the membrane. Participates in the innate immune response to microbial agents. Acts via MYD88 and TRAF6, leading to NF-kappa-B activation, cytokine secretion and the inflammatory response. The chain is Toll-like receptor 10 (TLR10) from Bos taurus (Bovine).